A 340-amino-acid polypeptide reads, in one-letter code: Tryptophan--tRNA ligase (340 aa).

Residues 11–13 (RPT) and 19–20 (GH) each bind ATP. Residues 12–20 (PTGKLHLGH) carry the 'HIGH' region motif. D140 is a binding site for L-tryptophan. ATP is bound by residues 152-154 (GND), L194, and 202-206 (KMSKS). The short motif at 202–206 (KMSKS) is the 'KMSKS' region element.

This sequence belongs to the class-I aminoacyl-tRNA synthetase family. As to quaternary structure, homodimer.

The protein localises to the cytoplasm. It catalyses the reaction tRNA(Trp) + L-tryptophan + ATP = L-tryptophyl-tRNA(Trp) + AMP + diphosphate + H(+). Functionally, catalyzes the attachment of tryptophan to tRNA(Trp). In Streptococcus pyogenes serotype M3 (strain ATCC BAA-595 / MGAS315), this protein is Tryptophan--tRNA ligase.